Here is a 197-residue protein sequence, read N- to C-terminus: Proteasome subunit beta 1 (197 aa).

A propeptide spans 1–6 (MNRKTG) (removed in mature form; by autocatalysis). Thr7 acts as the Nucleophile in catalysis.

Belongs to the peptidase T1B family. As to quaternary structure, the 20S proteasome core is composed of 14 alpha and 14 beta subunits that assemble into four stacked heptameric rings, resulting in a barrel-shaped structure. The two inner rings, each composed of seven catalytic beta subunits, are sandwiched by two outer rings, each composed of seven alpha subunits. The catalytic chamber with the active sites is on the inside of the barrel. Has a gated structure, the ends of the cylinder being occluded by the N-termini of the alpha-subunits. Is capped at one or both ends by the proteasome regulatory ATPase, PAN.

The protein resides in the cytoplasm. The catalysed reaction is Cleavage of peptide bonds with very broad specificity.. Its activity is regulated as follows. The formation of the proteasomal ATPase PAN-20S proteasome complex, via the docking of the C-termini of PAN into the intersubunit pockets in the alpha-rings, triggers opening of the gate for substrate entry. Interconversion between the open-gate and close-gate conformations leads to a dynamic regulation of the 20S proteasome proteolysis activity. In terms of biological role, component of the proteasome core, a large protease complex with broad specificity involved in protein degradation. The polypeptide is Proteasome subunit beta 1 (Pyrococcus abyssi (strain GE5 / Orsay)).